Here is a 130-residue protein sequence, read N- to C-terminus: Small ribosomal subunit protein uS9 (130 aa).

This sequence belongs to the universal ribosomal protein uS9 family.

The protein is Small ribosomal subunit protein uS9 of Burkholderia ambifaria (strain MC40-6).